A 508-amino-acid polypeptide reads, in one-letter code: 6-phosphogluconate dehydrogenase, decarboxylating 2, chloroplastic (508 aa).

The N-terminal 12 residues, 1–12 (MASPAPAPPAAS), are a transit peptide targeting the chloroplast. NADP(+)-binding positions include 28-33 (GLATMG), 51-53 (NRT), 95-97 (VQA), and N123. Substrate is bound by residues N123 and 149-151 (SGG). Catalysis depends on K203, which acts as the Proton acceptor. 206–207 (HN) is a binding site for substrate. Catalysis depends on E210, which acts as the Proton donor. Substrate contacts are provided by Y211, K284, R311, R475, and H481.

The protein belongs to the 6-phosphogluconate dehydrogenase family. As to quaternary structure, homodimer.

It localises to the plastid. It is found in the chloroplast. The enzyme catalyses 6-phospho-D-gluconate + NADP(+) = D-ribulose 5-phosphate + CO2 + NADPH. The protein operates within carbohydrate degradation; pentose phosphate pathway; D-ribulose 5-phosphate from D-glucose 6-phosphate (oxidative stage): step 3/3. Its function is as follows. Catalyzes the oxidative decarboxylation of 6-phosphogluconate to ribulose 5-phosphate and CO(2), with concomitant reduction of NADP to NADPH. This is 6-phosphogluconate dehydrogenase, decarboxylating 2, chloroplastic (G6PGH2) from Oryza sativa subsp. japonica (Rice).